The primary structure comprises 510 residues: Gallate 1-beta-glucosyltransferase (510 aa).

The active-site Proton acceptor is the H19. Residue H19 participates in an anthocyanidin binding. The UDP-alpha-D-glucose site is built by Q343, H358, W361, N362, S363, and E366. G381 lines the an anthocyanidin pocket. Residues D382 and Q383 each contribute to the UDP-alpha-D-glucose site.

This sequence belongs to the UDP-glycosyltransferase family. As to expression, expressed in swelling buds and young leaves.

It carries out the reaction 3,4,5-trihydroxybenzoate + UDP-alpha-D-glucose = 1-O-galloyl-beta-D-glucose + UDP. It catalyses the reaction vanillate + UDP-alpha-D-glucose = 1-O-(4-hydroxy-3-methoxybenzoyl)-beta-D-glucose + UDP. The catalysed reaction is 3,4-dihydroxybenzoate + UDP-alpha-D-glucose = 1-O-(3,4-dihydroxy-benzoyl)-beta-D-glucose + UDP. Functionally, glucosyltransferase that catalyzes the formation of 1-O-beta-D-glucose esters with hydroxybenzoic acids as preferred glucosyl acceptors. Has the highest activity with 3,4-dihydroxybenzoate, vanillate and gallate in vitro. Gallate is the predicted native substrate of the enzyme, which thus catalyzes the formation of 1-O-galloyl-beta-D-glucose, the first committed step of gallotannin biosynthesis. This is Gallate 1-beta-glucosyltransferase from Quercus robur (English oak).